Reading from the N-terminus, the 329-residue chain is Deoxynucleotidyltransferase terminal-interacting protein 1 (329 aa).

Disordered stretches follow at residues 1-22 and 147-178; these read MGAT…GGLE and KRGR…ILSS. The tract at residues 56–147 is important for dimerization; that stretch reads MTTSFTDPAI…RLTHELPGIK (92 aa). Over residues 147 to 158 the composition is skewed to basic and acidic residues; that stretch reads KRGRQAEEECAH. Positions 159–173 form a DNA-binding region, a.T hook; sequence RGSPLPKKRKGRPPG. Ser161 bears the Phosphoserine mark. Residues 164–170 carry the Nuclear localization signal motif; sequence PKKRKGR. An important for DNA and nucleosome binding region spans residues 197-316; it reads REGPKWDPAR…MRKYMETLRT (120 aa). Residues 216 to 237 constitute a DNA-binding region (H-T-H motif); that stretch reads GSRANKALGMGGTRGRIYIKHP.

As to quaternary structure, monomer and homodimer. A minor proportion may form homotrimers. Interacts with ZNF541. Interacts with the terminal deoxynucleotidyltransferase DNTT. Interacts with TRERF1. Identified in a histone deacetylase complex that contains DNTTIP1, HDAC1 and MIDEAS; this complex assembles into a tetramer that contains four copies of each protein chain. Component of a histone deacetylase complex containing DNTTIP1, ZNF541, HDAC1 and HDAC2. Identified in a complex with KCTD19, HDAC1, HDAC2 and ZNF541.

Its subcellular location is the nucleus. Its function is as follows. Increases DNTT terminal deoxynucleotidyltransferase activity (in vitro). Also acts as a transcriptional regulator, binding to the consensus sequence 5'-GNTGCATG-3' following an AT-tract. Associates with RAB20 promoter and positively regulates its transcription. Binds DNA and nucleosomes; may recruit HDAC1 complexes to nucleosomes or naked DNA. This Pongo abelii (Sumatran orangutan) protein is Deoxynucleotidyltransferase terminal-interacting protein 1 (DNTTIP1).